The primary structure comprises 463 residues: uncharacterized protein (463 aa).

Helical transmembrane passes span 3 to 23, 88 to 108, 112 to 132, 216 to 236, 245 to 265, and 276 to 296; these read IPPE…SLLV, VAAA…AELA, AIHG…PIAL, FSPA…DFLW, LLLL…SALI, and LPIA…AVAV. Residues 303–322 form a disordered region; sequence VPGGSPPTSNPAPAAPSSNS. The span at 306–316 shows a compositional bias: pro residues; the sequence is GSPPTSNPAPA. The next 2 helical transmembrane spans lie at 323-343 and 419-439; these read VGSA…APPG and AGTL…AGMV.

It belongs to the mycobacterial PPE family.

It localises to the cell membrane. This is an uncharacterized protein from Mycobacterium tuberculosis (strain CDC 1551 / Oshkosh).